We begin with the raw amino-acid sequence, 626 residues long: MAIEGEKKKDPRAWDALTPSLAEWVLDAISSMGFEKMTPVQASTIPLFMGNKDVVVEAVTGSGKTLSFLIPVVEKLLRLEEPLKKHHVGAIIVSPTRELATQIHSVLTSLLKFHEPSAEALQPLEEGEKRKPSSTLRVIPQLLLGGTTTPAQDLSRFLKNSPNLLISTPGRLLELLSSPHVHCPQSSFEVLVLDEADRLLDLGFKDDLQKILGRLPKQRRTGLFSASVSEAVGEIVRVGLRNPVKIAVKVKGAGGGDKMTPASLQMSYLLTPPTHKFPALLSLLSQLEPTPQKSIIYLSTCAAVDYFQPLLEAVLPKQFGLVSLHGKHPPNVRQRNFSKYVAAVSPTILLTTDVAARGLDIPQVDLVVQIDPPSDPKVFLHRCGRAGRAGRKGLSVIFLQPGREEDYIPFLEIRKTPITPLKRPEISTTGEAAKILISKMRKEVLSDRALYDKGQRAFVSWVQAYSKHQASSIFRVADLDWTDLGNAWALVRLPKMPELKKWEGDKTLGIKLDMSEYAYKDKIREKARRVAMEEAKNAGPYVPTEEQIAKKKQREAWSQKHEKQDLKELKREKKKRKREIERLEKMTDEEKKEEQAKEKELQDLIEQVKKRKIEDDADVEFEGFAD.

The short motif at 14 to 42 is the Q motif element; it reads WDALTPSLAEWVLDAISSMGFEKMTPVQA. Residues 45–246 enclose the Helicase ATP-binding domain; the sequence is IPLFMGNKDV…RVGLRNPVKI (202 aa). 58–65 lines the ATP pocket; that stretch reads AVTGSGKT. The short motif at 194–197 is the DEAD box element; it reads DEAD. One can recognise a Helicase C-terminal domain in the interval 279–437; that stretch reads ALLSLLSQLE…TTGEAAKILI (159 aa). The segment at 553–599 is disordered; sequence QREAWSQKHEKQDLKELKREKKKRKREIERLEKMTDEEKKEEQAKEK. 2 stretches are compositionally biased toward basic and acidic residues: residues 554-571 and 578-599; these read REAWSQKHEKQDLKELKR and REIERLEKMTDEEKKEEQAKEK. The stretch at 558-620 forms a coiled coil; sequence SQKHEKQDLK…RKIEDDADVE (63 aa).

This sequence belongs to the DEAD box helicase family. DDX55/SPB4 subfamily. In terms of assembly, component of pre-60S ribosomal complexes.

It localises to the nucleus. The protein localises to the nucleolus. It carries out the reaction ATP + H2O = ADP + phosphate + H(+). Functionally, ATP-binding RNA helicase involved in the biogenesis of 60S ribosomal subunits. Binds 90S pre-ribosomal particles and dissociates from pre-60S ribosomal particles after processing of 27SB pre-rRNA. Required for the normal formation of 18S rRNA through the processing of pre-rRNAs at sites A0, A1 and A2, and the normal formation of 25S and 5.8S rRNAs through the processing of pre-rRNAs at sites C1 and C2. The chain is ATP-dependent rRNA helicase spb4 from Botryotinia fuckeliana (strain B05.10) (Noble rot fungus).